A 278-amino-acid polypeptide reads, in one-letter code: PILR alpha-associated neural protein (278 aa).

Positions 1-27 are cleaved as a signal peptide; it reads MWSAQLLSQLLPLWPLLLLSVLPPAQG. The interval 25 to 93 is disordered; that stretch reads AQGSSHRSPP…PSGFEEGPPS (69 aa). Topologically, residues 28-174 are extracellular; sequence SSHRSPPAPA…FGGRGEGVDP (147 aa). A glycan (O-linked (GalNAc...) threonine) is linked at T136. A helical membrane pass occupies residues 175-195; that stretch reads QLYVTITISIIIVLVATGIIF. The Cytoplasmic portion of the chain corresponds to 196 to 278; that stretch reads KFCWDRSQKR…QLNRIPLVNL (83 aa). Residues 206–278 form a disordered region; sequence RRPSGQQGAL…QLNRIPLVNL (73 aa). Positions 209–225 are enriched in polar residues; the sequence is SGQQGALRQEESQQPLT.

Post-translationally, O-glycosylation at Thr-136 is essential for recognition by PILRA. Mainly expressed in brain and spinal cord. Weak expression also detected in heart, kidney, spleen and lymph node. Virtually no expression detected in liver and embryo relative to brain.

The protein localises to the membrane. Its function is as follows. Acts as a ligand for PILRA in neuronal tissues, where it may be involved in immune regulation. In Mus musculus (Mouse), this protein is PILR alpha-associated neural protein (Pianp).